We begin with the raw amino-acid sequence, 290 residues long: Cbb3-type cytochrome c oxidase subunit FixP (290 aa).

A helical transmembrane segment spans residues 33–53 (WWVITFYITIVWAIGYWIVYP). Cytochrome c domains follow at residues 109–198 (LARA…RSLS) and 206–287 (YDAA…HSLG). Cys122, Cys125, His126, Met173, Cys219, Cys222, His223, and Met264 together coordinate heme c.

Belongs to the CcoP / FixP family. As to quaternary structure, component of the cbb3-type cytochrome c oxidase at least composed of FixN, FixO, FixQ and FixP. Heme c serves as cofactor.

The protein resides in the cell inner membrane. The protein operates within energy metabolism; oxidative phosphorylation. Its function is as follows. C-type cytochrome. Part of the cbb3-type cytochrome c oxidase complex. FixP subunit is required for transferring electrons from donor cytochrome c via its heme groups to FixO subunit. From there, electrons are shuttled to the catalytic binuclear center of FixN subunit where oxygen reduction takes place. The complex also functions as a proton pump. This Bradyrhizobium sp. (strain ORS 278) protein is Cbb3-type cytochrome c oxidase subunit FixP.